The following is a 163-amino-acid chain: MLKYIPAIFAIILSSNIAIASKNYDYISLTPLRHVADLIDSHITNIDHLFNNRLTFYESSSLKSKFITKDKQYIIVMEVPGFDKSQIKVKLNGKKLFIAGNIEDKNKANDSDNYMNKNFNYVISLYEDVDQKSISARLKNGILTIILPRIEVKEQDSREITIN.

The 109-residue stretch at 55–163 folds into the sHSP domain; sequence TFYESSSLKS…EQDSREITIN (109 aa).

Belongs to the small heat shock protein (HSP20) family.

The polypeptide is Small heat shock protein C1 (hspC1) (Rickettsia prowazekii (strain Madrid E)).